Here is a 148-residue protein sequence, read N- to C-terminus: Deoxyuridine 5'-triphosphate nucleotidohydrolase (148 aa).

Residues 68–70 (RSG), N81, 85–87 (TID), and K95 contribute to the substrate site.

The protein belongs to the dUTPase family. Mg(2+) is required as a cofactor.

The catalysed reaction is dUTP + H2O = dUMP + diphosphate + H(+). It functions in the pathway pyrimidine metabolism; dUMP biosynthesis; dUMP from dCTP (dUTP route): step 2/2. Functionally, this enzyme is involved in nucleotide metabolism: it produces dUMP, the immediate precursor of thymidine nucleotides and it decreases the intracellular concentration of dUTP so that uracil cannot be incorporated into DNA. This is Deoxyuridine 5'-triphosphate nucleotidohydrolase from Thermoanaerobacter sp. (strain X514).